Here is a 537-residue protein sequence, read N- to C-terminus: Interleukin-2 receptor subunit beta (537 aa).

An N-terminal signal peptide occupies residues 1–26; that stretch reads MATVDLSWRLPLYILLLLLATTWVSA. The Extracellular segment spans residues 27–239; that stretch reads AVNDCSHLKC…FRTRPADPKE (213 aa). An intrachain disulfide couples cysteine 36 to cysteine 46. Asparagine 43, asparagine 55, and asparagine 71 each carry an N-linked (GlcNAc...) asparagine glycan. Residues cysteine 74 and cysteine 86 are joined by a disulfide bond. The region spanning 135–235 is the Fibronectin type-III domain; it reads APHSLQVLHI…QPMAFRTRPA (101 aa). A glycan (N-linked (GlcNAc...) asparagine) is linked at asparagine 150. The short motif at 221–225 is the WSXWS motif element; sequence WSPWS. A helical membrane pass occupies residues 240–267; that stretch reads IFPLPWLRCLLLVLGCFFGFLSCVCVLV. Residues 268–537 are Cytoplasmic-facing; that stretch reads KCRYLGPWLK…LQAQDSAHLI (270 aa). The Box 1 motif motif lies at 280 to 288; it reads LKCHIPDPS. Disordered regions lie at residues 442 to 466 and 479 to 498; these read AYGN…SLAS and ELGD…QASV. The segment covering 487–497 has biased composition (polar residues); sequence MSTNSSGQQAS.

It belongs to the type I cytokine receptor family. Type 4 subfamily. As to quaternary structure, non-covalent dimer of an alpha and a beta subunit. IL2R exists in 3 different forms: a high affinity dimer, an intermediate affinity monomer (beta subunit), and a low affinity monomer (alpha subunit). The high and intermediate affinity forms also associate with a gamma subunit. Interacts with SHB upon interleukin stimulation.

It localises to the cell membrane. The protein localises to the cell surface. Its function is as follows. Receptor for interleukin-2. This beta subunit is involved in receptor mediated endocytosis and transduces the mitogenic signals of IL2. Probably in association with IL15RA, involved in the stimulation of neutrophil phagocytosis by IL15. In Rattus norvegicus (Rat), this protein is Interleukin-2 receptor subunit beta (Il2rb).